The chain runs to 309 residues: Ribosomal protein L11 methyltransferase (309 aa).

Residues Thr-144, Gly-165, Asp-187, and Asn-235 each coordinate S-adenosyl-L-methionine.

Belongs to the methyltransferase superfamily. PrmA family.

It localises to the cytoplasm. The catalysed reaction is L-lysyl-[protein] + 3 S-adenosyl-L-methionine = N(6),N(6),N(6)-trimethyl-L-lysyl-[protein] + 3 S-adenosyl-L-homocysteine + 3 H(+). Functionally, methylates ribosomal protein L11. In Prochlorococcus marinus (strain MIT 9215), this protein is Ribosomal protein L11 methyltransferase.